The following is a 184-amino-acid chain: Transposon Tn917 resolvase (184 aa).

The region spanning 1-134 (MIFGYARVST…SGLKAARVRG (134 aa)) is the Resolvase/invertase-type recombinase catalytic domain. The active-site O-(5'-phospho-DNA)-serine intermediate is Ser9. Positions 161 to 180 (IRQILDASKLSKTTFYRYLN) form a DNA-binding region, H-T-H motif.

The protein belongs to the site-specific recombinase resolvase family.

In terms of biological role, resolvase catalyzes the resolution (a site-specific recombination) of the cointegrated replicon to yield the final transposition products. This chain is Transposon Tn917 resolvase (tnpR), found in Enterococcus faecalis (Streptococcus faecalis).